Here is a 102-residue protein sequence, read N- to C-terminus: Small ribosomal subunit protein uS10 (102 aa).

It belongs to the universal ribosomal protein uS10 family. In terms of assembly, part of the 30S ribosomal subunit.

Involved in the binding of tRNA to the ribosomes. The protein is Small ribosomal subunit protein uS10 of Rhizobium meliloti (strain 1021) (Ensifer meliloti).